We begin with the raw amino-acid sequence, 225 residues long: Ribonuclease HII (225 aa).

Positions 35 to 225 constitute an RNase H type-2 domain; the sequence is GLVAGVDEVG…SFRPCQISLD (191 aa). A divalent metal cation is bound by residues Asp-41, Glu-42, and Asp-137.

This sequence belongs to the RNase HII family. Mn(2+) is required as a cofactor. Mg(2+) serves as cofactor.

It is found in the cytoplasm. It catalyses the reaction Endonucleolytic cleavage to 5'-phosphomonoester.. Endonuclease that specifically degrades the RNA of RNA-DNA hybrids. The chain is Ribonuclease HII from Trichormus variabilis (strain ATCC 29413 / PCC 7937) (Anabaena variabilis).